We begin with the raw amino-acid sequence, 245 residues long: UPF0246 protein CE1889 (245 aa).

The tract at residues 1–20 is disordered; that stretch reads MLILLPPSETKTPGGAGAPL.

The protein belongs to the UPF0246 family.

The chain is UPF0246 protein CE1889 from Corynebacterium efficiens (strain DSM 44549 / YS-314 / AJ 12310 / JCM 11189 / NBRC 100395).